A 78-amino-acid polypeptide reads, in one-letter code: Hainantoxin-XX.3 (78 aa).

The first 23 residues, 1-23 (MKSATLLALSFLLIASCFLICEA), serve as a signal peptide directing secretion. Positions 24–47 (EHSRYEEHEILEENMGDVVNLEQR) are excised as a propeptide. 3 disulfide bridges follow: Cys-49–Cys-62, Cys-56–Cys-66, and Cys-61–Cys-77.

It belongs to the hainantoxin family. 20 subfamily. As to expression, expressed by the venom gland.

It is found in the secreted. Functionally, putative ion channel inhibitor. The sequence is that of Hainantoxin-XX.3 from Cyriopagopus hainanus (Chinese bird spider).